Here is a 562-residue protein sequence, read N- to C-terminus: Phosphatidylinositol 4-phosphate 5-kinase type-1 alpha (562 aa).

The PIPK domain occupies 81–449; the sequence is TSSALKGAIQ…RFQRFMCNTV (369 aa). Lys-103 is covalently cross-linked (Glycyl lysine isopeptide (Lys-Gly) (interchain with G-Cter in ubiquitin)). Position 486 is a phosphoserine (Ser-486). Positions 506–526 are disordered; the sequence is HLGRPDVLPQTPPLEEISEGS.

As to quaternary structure, interacts with RAC1. Interacts with TUT1. Forms a complex with CDH1/E-cadherin, CTNNB1/beta-catenin and CTNND1 at the plasma membrane upon calcium stimulation. Found in a ternary complex with IRS1 and DGKZ in the absence of insulin stimulation. Interacts with DGKZ. Interacts with PIP4K2C; the interaction inhibits PIP5K1A kinase activity. Highly expressed in heart, placenta, skeletal muscle, kidney and pancreas. Detected at lower levels in brain, lung and liver.

The protein resides in the cell membrane. It localises to the cytoplasm. It is found in the nucleus. Its subcellular location is the nucleus speckle. The protein localises to the cell projection. The protein resides in the ruffle. It localises to the lamellipodium. It carries out the reaction a 1,2-diacyl-sn-glycero-3-phospho-(1D-myo-inositol 4-phosphate) + ATP = a 1,2-diacyl-sn-glycero-3-phospho-(1D-myo-inositol-4,5-bisphosphate) + ADP + H(+). The enzyme catalyses 1-octadecanoyl-2-(5Z,8Z,11Z,14Z)-eicosatetraenoyl-sn-glycero-3-phospho-1D-myo-inositol 4-phosphate + ATP = 1-octadecanoyl-2-(5Z,8Z,11Z,14Z)-eicosatetraenoyl-sn-glycero-3-phospho-1D-myo-inositol 4,5-bisphosphate + ADP + H(+). The catalysed reaction is 1,2-dihexadecanoyl-sn-glycero-3-phospho-(1D-myo-inositol-4-phosphate) + ATP = 1,2-dihexadecanoyl-sn-glycero-3-phospho-(1D-myo-inositol-4,5-bisphosphate) + ADP + H(+). It catalyses the reaction 1-octadecanoyl-2-(9Z)-octadecenoyl-sn-glycero-3-phospho-1D-myo-inositol 4-phosphate + ATP = 1-octadecanoyl-2-(9Z)-octadecenoyl-sn-glycero-3-phospho-1D-myo-inositol 4,5-bisphosphate + ADP + H(+). It carries out the reaction 1-octadecanoyl-2-(9Z)-octadecenoyl-sn-glycero-3-phospho-1D-myo-inositol + ATP = 1-octadecanoyl-2-(9Z)-octadecenoyl-sn-glycero-3-phospho-1D-myo-inositol 5-phosphate + ADP + H(+). The enzyme catalyses 1-octadecanoyl-2-(9Z,12Z)-octadecadienoyl-sn-glycero-3-phospho-1D-myo-inositol + ATP = 1-octadecanoyl-2-(9Z,12Z)-octadecadienoyl-sn-glycero-3-phospho-1D-myo-inositol 5-phosphate + ADP + H(+). The catalysed reaction is 1-octadecanoyl-2-(5Z,8Z,11Z,14Z-eicosatetraenoyl)-sn-glycero-3-phospho-(1D-myo-inositol) + ATP = 1-octadecanoyl-2-(5Z,8Z,11Z,14Z)-eicosatetraenoyl-sn-glycero-3-phospho-1D-myo-inositol 5-phosphate + ADP + H(+). It catalyses the reaction 1,2-di-(9Z,12Z)-octadecadienoyl-sn-glycero-3-phospho-1D-myo-inositol + ATP = 1,2-di(9Z,12Z)-octadecadienoyl-sn-glycero-3-phospho-1D-myo-inositol 5-phosphate + ADP + H(+). With respect to regulation, activated by diarachidonoyl phosphatidic acid (DAPA), when 1,2-dipalmitoyl-PI4P is used as a substrate. In terms of biological role, catalyzes the phosphorylation of phosphatidylinositol 4-phosphate (PtdIns(4)P/PI4P) to form phosphatidylinositol 4,5-bisphosphate (PtdIns(4,5)P2/PIP2), a lipid second messenger that regulates several cellular processes such as signal transduction, vesicle trafficking, actin cytoskeleton dynamics, cell adhesion, and cell motility. PtdIns(4,5)P2 can directly act as a second messenger or can be utilized as a precursor to generate other second messengers: inositol 1,4,5-trisphosphate (IP3), diacylglycerol (DAG) or phosphatidylinositol-3,4,5-trisphosphate (PtdIns(3,4,5)P3/PIP3). PIP5K1A-mediated phosphorylation of PtdIns(4)P is the predominant pathway for PtdIns(4,5)P2 synthesis. Can also use phosphatidylinositol (PtdIns) as substrate in vitro. Together with PIP5K1C, is required for phagocytosis, both enzymes regulating different types of actin remodeling at sequential steps. Promotes particle ingestion by activating the WAS GTPase-binding protein that induces Arp2/3 dependent actin polymerization at the nascent phagocytic cup. Together with PIP5K1B, is required, after stimulation by G-protein coupled receptors, for the synthesis of IP3 that will induce stable platelet adhesion. Recruited to the plasma membrane by the E-cadherin/beta-catenin complex where it provides the substrate PtdIns(4,5)P2 for the production of PtdIns(3,4,5)P3, IP3 and DAG, that will mobilize internal calcium and drive keratinocyte differentiation. Positively regulates insulin-induced translocation of SLC2A4 to the cell membrane in adipocytes. Together with PIP5K1C has a role during embryogenesis. Independently of its catalytic activity, is required for membrane ruffling formation, actin organization and focal adhesion formation during directional cell migration by controlling integrin-induced translocation of the small GTPase RAC1 to the plasma membrane. Also functions in the nucleus where it acts as an activator of TUT1 adenylyltransferase activity in nuclear speckles, thereby regulating mRNA polyadenylation of a select set of mRNAs. The protein is Phosphatidylinositol 4-phosphate 5-kinase type-1 alpha of Homo sapiens (Human).